The sequence spans 423 residues: Putative gustatory receptor 97a (423 aa).

Residues 1–31 (MRFLRRQTRRLRSIWQRSLPVRFRRGKLHTQ) are Cytoplasmic-facing. The chain crosses the membrane as a helical span at residues 32–52 (LVTICLYATVFLNILYGVYLG). The Extracellular segment spans residues 53-65 (RFSFRRKKFVFSK). The helical transmembrane segment at 66-86 (GLTIYSLFVATFFALFYIWNI) threads the bilayer. Over 87 to 99 (YNEISTGQINLRD) the chain is Cytoplasmic. A helical membrane pass occupies residues 100–120 (TIGIYCYMNVCVCLFNYVTQW). Residues 121 to 152 (EKTLQIIRFQNSVPLFKVLDSLDISAMIVWRA) lie on the Extracellular side of the membrane. Residues 153 to 173 (FIYGLLKIVFCPLITYITLIL) traverse the membrane as a helical segment. At 174-200 (YHRRSISESQWTSVTTTKTMLPLIVSN) the chain is on the cytoplasmic side. The helical transmembrane segment at 201–221 (QINNCFFGGLVLANLIFAAVN) threads the bilayer. Residues 222–278 (RKLHGIVKEANMLQSPVQMNLHKPYYRMRRFCELADLLDELARKYGFTASRSKNYLR) lie on the Extracellular side of the membrane. The helical transmembrane segment at 279–299 (FTDWSMVLSMLMNLLGITMGC) threads the bilayer. Topologically, residues 300–317 (YNQYLAIADHYINEEPFD) are cytoplasmic. A helical membrane pass occupies residues 318-338 (LFLAIVLVVFLAVPFLELVMV). Topologically, residues 339 to 423 (ARISNQTLTR…SDLTLRFSLK (85 aa)) are extracellular. Residues N343 and N393 are each glycosylated (N-linked (GlcNAc...) asparagine).

This sequence belongs to the insect chemoreceptor superfamily. Gustatory receptor (GR) family. Gr22e subfamily. As to expression, in larvae, is expressed in neurons of the terminal external chemosensory organ.

Its subcellular location is the cell membrane. Functionally, probable gustatory receptor which mediates acceptance or avoidance behavior, depending on its substrates. This Drosophila melanogaster (Fruit fly) protein is Putative gustatory receptor 97a (Gr97a).